A 994-amino-acid polypeptide reads, in one-letter code: MRVLVFPSVLHSGQIHSIDINKDNSKILTSGLDKEINVWNLQEFVQLTTEGKDTVKDDIENVKPLLRITAHEDLVNIVKWCPQNENVFVSGDIQGKVYMHDISKNTHELIFPFGWKEDGTSRVVDLAWSDDGRMLAWSSGDCKIHIYDTEKATYQELTSLSNLEKLTVQRSIAFDPTNHYLISMGDDTSIYLYQYQYEPTTRNYQFRLINRISKLINKTSMNVDYKRISWSPDGEYVSVPTASKNQTSLISLLSRSNGWNNILSLVGHNLDCEVVQYNPMIYNSSENNDNPKLFNVIATAGSDMTLVVWNTTKDKPIFILQEISKKPIVDLCWDKTGNSLFVASLDGHLSIVSFHPQELGNTVSEELWKELFEAGEASIKPFNEKPDQDITPSTKKSSHNVIDILDQKNSINVHEAKAKKPTEGIKDLSSISPEEENADTESPLKQDLQAHDKQVTNFVPEVIPAIIEDAPETQTEDILHSAMSTTRSTKSQVKNPKEKPTKVTPEKAKVTTKNGKKRIQPMLISSMNENSSNNSVKKSNTSESNGTSNLVSSGKVLMEFDKPSYSISDDLYKQNKRTKTQDENSNKKLKRELEPVKFIGSVVLNPSTTFARIRLSIPKIRLNFQLSSTVEDNSFILDVKNGLGNETKPSRITYFKKEKQIWCDFIPRFIQLVAEGSTFWAVSTADGQILTYSHTSGKKLLPPIILGSPLSFLESHGNFLMAVTSIGELYVWNIEQKKIHLQSPSSLSSLLDLSNKYQEDGLSKSDNITMCSITNNGIPLITLSNGAGYLFNKDLGTWQTISESWWAFGSHYWDSLGNDDGSKPQSYGLFCDSNDSSIVGLLEQKTNESILRKTRAGRGKYFNKISKNMLMKEGFENLENTISLSHLENRILCCELLGEFKDFHDFFIIYVKRICELGFKAKLFEVCDQLLGPSEPNSTATKDGEANWNSEICGIKKHDLLKEVILSCAKNRDCQRILIHFGKKIGVIDIDEFN.

WD repeat units follow at residues 10–49 (LHSGQIHSIDINKDNSKILTSGLDKEINVWNLQEFVQLTT), 70–110 (AHED…HELI), 118–157 (DGTSRVVDLAWSDDGRMLAWSSGDCKIHIYDTEKATYQEL), 164–203 (EKLTVQRSIAFDPTNHYLISMGDDTSIYLYQYQYEPTTRN), 220–263 (SMNV…NNIL), 276–319 (QYNP…PIFI), and 323–364 (ISKK…NTVS). Disordered stretches follow at residues 413–445 (VHEAKAKKPTEGIKDLSSISPEEENADTESPLK) and 482–550 (AMST…TSNL). Positions 414-426 (HEAKAKKPTEGIK) are enriched in basic and acidic residues. Polar residues predominate over residues 482-492 (AMSTTRSTKSQ). Positions 495–509 (NPKEKPTKVTPEKAK) are enriched in basic and acidic residues. A compositionally biased stretch (low complexity) spans 525–545 (SSMNENSSNNSVKKSNTSESN).

It belongs to the WD repeat HIR1 family.

The protein resides in the nucleus. Functionally, required for replication-independent chromatin assembly and for the periodic repression of histone gene transcription during the cell cycle. This Debaryomyces hansenii (strain ATCC 36239 / CBS 767 / BCRC 21394 / JCM 1990 / NBRC 0083 / IGC 2968) (Yeast) protein is Protein HIR2 (HIR2).